Reading from the N-terminus, the 159-residue chain is Voltage-dependent N-type calcium channel subunit alpha-1B (159 aa).

The chain crosses the membrane as a helical span at residues 1 to 5 (LVTEI). Residues 1–159 (LVTEIADTDN…LMLNLFVAVI (159 aa)) form an IV repeat. Topologically, residues 6-13 (ADTDNFIN) are extracellular. The N-linked (GlcNAc...) asparagine glycan is linked to asparagine 13. A helical membrane pass occupies residues 14–32 (LSFLRLFRAARLIKLLRQG). Topologically, residues 33 to 51 (YTIRILLWTFVQSFKALPY) are cytoplasmic. Residues 52-71 (VCLLIAMLFFIYAIIGMQVF) form a helical membrane-spanning segment. The Extracellular portion of the chain corresponds to 72–135 (GNIALNDETS…LTKNECGSDF (64 aa)). The chain crosses the membrane as a helical span at residues 136-155 (AYFYFVSFIFLCSFLMLNLF). The Cytoplasmic portion of the chain corresponds to 156 to 159 (VAVI).

The protein belongs to the calcium channel alpha-1 subunit (TC 1.A.1.11) family. CACNA1B subfamily. As to quaternary structure, multisubunit complex consisting of alpha-1, alpha-2, beta and delta subunits in a 1:1:1:1 ratio. The channel activity is directed by the pore-forming and voltage-sensitive alpha-1 subunit. In many cases, this subunit is sufficient to generate voltage-sensitive calcium channel activity. The auxiliary subunits beta and alpha-2/delta linked by a disulfide bridge regulate the channel activity. Interacts with RIMBP2. Post-translationally, phosphorylated in vitro by CaM-kinase II, PKA, PKC and CGPK.

The protein localises to the membrane. The enzyme catalyses Ca(2+)(in) = Ca(2+)(out). Functionally, voltage-sensitive calcium channels (VSCC) mediate the entry of calcium ions into excitable cells and are also involved in a variety of calcium-dependent processes, including muscle contraction, hormone or neurotransmitter release, gene expression, cell motility, cell division and cell death. This alpha-1B subunit gives rise to N-type calcium currents. N-type calcium channels belong to the 'high-voltage activated' (HVA) group. They are involved in pain signaling. Calcium channels containing alpha-1B subunit may play a role in directed migration of immature neurons. Mediates Ca(2+) release probability at hippocampal neuronal soma and synaptic terminals. This chain is Voltage-dependent N-type calcium channel subunit alpha-1B (CACNA1B), found in Gallus gallus (Chicken).